Consider the following 184-residue polypeptide: Ribosome-recycling factor (184 aa).

It belongs to the RRF family.

The protein resides in the cytoplasm. In terms of biological role, responsible for the release of ribosomes from messenger RNA at the termination of protein biosynthesis. May increase the efficiency of translation by recycling ribosomes from one round of translation to another. This is Ribosome-recycling factor from Bifidobacterium animalis subsp. lactis (strain AD011).